We begin with the raw amino-acid sequence, 178 residues long: MTQLSSSDVPGMGRRQFMNLLTFGSVTGVALGALYPVVNYFIPPRAAGAGGGTTAKDELGNAITATGWLSSHPEGDRSLVQGLKGDPTYLIVEGPDAIGSYGINAICTHLGCVVPWNSGANKFMCPCHGSQYDATGKVVRGPAPLSLALANVSVENDNVFVSQWTETDFRTGDKPWWA.

Residues 20–42 (LLTFGSVTGVALGALYPVVNYFI) traverse the membrane as a helical segment. In terms of domain architecture, Rieske spans 65 to 161 (ATGWLSSHPE…VSVENDNVFV (97 aa)). C107, H109, C125, and H128 together coordinate [2Fe-2S] cluster. C112 and C127 form a disulfide bridge.

It belongs to the Rieske iron-sulfur protein family. The 4 large subunits of the cytochrome b6-f complex are cytochrome b6, subunit IV (17 kDa polypeptide, PetD), cytochrome f and the Rieske protein, while the 4 small subunits are PetG, PetL, PetM and PetN. The complex functions as a dimer. [2Fe-2S] cluster is required as a cofactor.

It is found in the cellular thylakoid membrane. The catalysed reaction is 2 oxidized [plastocyanin] + a plastoquinol + 2 H(+)(in) = 2 reduced [plastocyanin] + a plastoquinone + 4 H(+)(out). Its function is as follows. Component of the cytochrome b6-f complex, which mediates electron transfer between photosystem II (PSII) and photosystem I (PSI), cyclic electron flow around PSI, and state transitions. This is Cytochrome b6-f complex iron-sulfur subunit from Parasynechococcus marenigrum (strain WH8102).